The following is a 107-amino-acid chain: Universal stress protein B homolog (107 aa).

A run of 2 helical transmembrane segments spans residues 6 to 25 and 89 to 106; these read TILF…YVTA and LFIL…VAFM.

The protein belongs to the universal stress protein B family.

It localises to the cell inner membrane. This Vibrio cholerae serotype O1 (strain ATCC 39541 / Classical Ogawa 395 / O395) protein is Universal stress protein B homolog.